The sequence spans 252 residues: Ferritin-2, chloroplastic (252 aa).

A chloroplast-targeting transit peptide spans 1–43 (MMLRVSSSPAAAVANHLSGGAAATTAPARVTAQRSGVSLSAAA). The extension peptide (EP) stretch occupies residues 44 to 80 (AAGKGKEVLSGVVFQPFEEIKGELALVPQSPDRSLAR). Positions 81–234 (HKFVDDCEAA…KYVAQLRRVG (154 aa)) constitute a Ferritin-like diiron domain. Positions 98, 133, 136, 182, and 216 each coordinate Fe cation.

Belongs to the ferritin family. As to quaternary structure, oligomer of 24 subunits. There are two types of subunits: L (light) chain and H (heavy) chain. The major chain can be light or heavy, depending on the species and tissue type. The functional molecule forms a roughly spherical shell with a diameter of 12 nm and contains a central cavity into which the insoluble mineral iron core is deposited. As to expression, ferritins accumulate in seed during maturation. Then, they are degraded during the first days of germination. Present in roots and leaves after iron treatment.

It is found in the plastid. It localises to the chloroplast. The enzyme catalyses 4 Fe(2+) + O2 + 4 H(+) = 4 Fe(3+) + 2 H2O. Functionally, stores iron in a soluble, non-toxic, readily available form. Important for iron homeostasis. Has ferroxidase activity. Iron is taken up in the ferrous form and deposited as ferric hydroxides after oxidation. The protein is Ferritin-2, chloroplastic (FER2) of Zea mays (Maize).